Here is a 121-residue protein sequence, read N- to C-terminus: Flagellar protein FliT (121 aa).

The interval 1-50 (MNNAPHLYFAWQQLVEKSQLMLRLATEEQWDELIASEMAYVNAVQEIAHL) is required for homodimerization. Residues 60–98 (MQEQLRPMLLLILDNESKVKQLLQIRMDELAKLVGQSSV) are fliD binding.

The protein belongs to the FliT family. Homodimer. Interacts with FliD and FlhC.

The protein resides in the cytoplasm. Its subcellular location is the cytosol. Dual-function protein that regulates the transcription of class 2 flagellar operons and that also acts as an export chaperone for the filament-capping protein FliD. As a transcriptional regulator, acts as an anti-FlhDC factor; it directly binds FlhC, thus inhibiting the binding of the FlhC/FlhD complex to class 2 promoters, resulting in decreased expression of class 2 flagellar operons. As a chaperone, effects FliD transition to the membrane by preventing its premature polymerization, and by directing it to the export apparatus. The protein is Flagellar protein FliT of Escherichia coli O6:K15:H31 (strain 536 / UPEC).